A 66-amino-acid chain; its full sequence is Large ribosomal subunit protein bL33c (66 aa).

Belongs to the bacterial ribosomal protein bL33 family.

The protein resides in the plastid. Its subcellular location is the chloroplast. In Nandina domestica (Heavenly bamboo), this protein is Large ribosomal subunit protein bL33c.